The primary structure comprises 427 residues: WD repeat and SOCS box-containing protein 1 (427 aa).

WD repeat units lie at residues 129–170 (SRSI…LLLN), 173–213 (DHTD…NMVK), 217–256 (GHPN…LIRK), 259–298 (GHHN…ILLE), and 314–353 (ANDR…PQAV). Residues 379-427 (SVHFWECPRSIASLQHLCRMALRRVKTTQQVEALPVPMPLRDFLTYRVV) form the SOCS box domain.

In terms of assembly, component of a probable ECS E3 ubiquitin-protein ligase complex that contains the Elongin BC complex.

The protein operates within protein modification; protein ubiquitination. Its function is as follows. Probable substrate-recognition component of a SCF-like ECS (Elongin-Cullin-SOCS-box protein) E3 ubiquitin-protein ligase complex which mediates the ubiquitination and subsequent proteasomal degradation of target proteins. The sequence is that of WD repeat and SOCS box-containing protein 1 (wsb1) from Takifugu rubripes (Japanese pufferfish).